The following is a 126-amino-acid chain: Large ribosomal subunit protein bL12 (126 aa).

The protein belongs to the bacterial ribosomal protein bL12 family. In terms of assembly, homodimer. Part of the ribosomal stalk of the 50S ribosomal subunit. Forms a multimeric L10(L12)X complex, where L10 forms an elongated spine to which 2 to 4 L12 dimers bind in a sequential fashion. Binds GTP-bound translation factors.

Its function is as follows. Forms part of the ribosomal stalk which helps the ribosome interact with GTP-bound translation factors. Is thus essential for accurate translation. This is Large ribosomal subunit protein bL12 from Moorella thermoacetica (strain ATCC 39073 / JCM 9320).